The following is a 422-amino-acid chain: Glycine amidinotransferase, mitochondrial (422 aa).

The transit peptide at 1 to 37 (MLRVRCVRGGSRGAEAVHYIGSMLRKGFVGWVQRSFQ) directs the protein to the mitochondrion. Residues Asp-253 and His-302 contribute to the active site. Cys-406 acts as the Amidino-cysteine intermediate in catalysis.

The protein belongs to the amidinotransferase family. Homodimer.

The protein localises to the mitochondrion inner membrane. It catalyses the reaction L-arginine + glycine = guanidinoacetate + L-ornithine. The protein operates within amine and polyamine biosynthesis; creatine biosynthesis; creatine from L-arginine and glycine: step 1/2. Functionally, catalyzes the biosynthesis of guanidinoacetate, the immediate precursor of creatine. Creatine plays a vital role in energy metabolism in muscle tissues. May play a role in embryonic and central nervous system development. The protein is Glycine amidinotransferase, mitochondrial of Xenopus tropicalis (Western clawed frog).